The following is a 614-amino-acid chain: Translation initiation factor IF-2 (614 aa).

In terms of domain architecture, tr-type G spans 115–283 (ARAPIVTIMG…ILLIAELNNY (169 aa)). The interval 124-131 (GHVDHGKT) is G1. 124–131 (GHVDHGKT) is a binding site for GTP. The interval 149 to 153 (GITQH) is G2. Positions 170-173 (DTPG) are G3. GTP contacts are provided by residues 170 to 174 (DTPGH) and 224 to 227 (NKMD). Residues 224 to 227 (NKMD) are G4. The G5 stretch occupies residues 260-262 (SAL).

It belongs to the TRAFAC class translation factor GTPase superfamily. Classic translation factor GTPase family. IF-2 subfamily.

It localises to the cytoplasm. In terms of biological role, one of the essential components for the initiation of protein synthesis. Protects formylmethionyl-tRNA from spontaneous hydrolysis and promotes its binding to the 30S ribosomal subunits. Also involved in the hydrolysis of GTP during the formation of the 70S ribosomal complex. The protein is Translation initiation factor IF-2 of Ureaplasma parvum serovar 3 (strain ATCC 27815 / 27 / NCTC 11736).